A 193-amino-acid polypeptide reads, in one-letter code: Probable GTP-binding protein EngB (193 aa).

One can recognise an EngB-type G domain in the interval 20–193; sequence GVPEVAFAGR…ELAHEISRCI (174 aa). GTP-binding positions include 28–35, 55–59, 73–76, 140–143, and 171–176; these read GRSNVGKS, GSTRQ, DLPG, TKAD, and IMWVSS. 2 residues coordinate Mg(2+): Ser35 and Thr57.

This sequence belongs to the TRAFAC class TrmE-Era-EngA-EngB-Septin-like GTPase superfamily. EngB GTPase family. Requires Mg(2+) as cofactor.

Functionally, necessary for normal cell division and for the maintenance of normal septation. This is Probable GTP-binding protein EngB from Anaplasma phagocytophilum (strain HZ).